Consider the following 399-residue polypeptide: Pre-mycofactocin synthase (399 aa).

The 383-residue stretch at 4–386 (ARDIWFETVA…VPEDILVPEG (383 aa)) folds into the FMN hydroxy acid dehydrogenase domain. Positions 111 and 131 each coordinate FMN. A 2-oxocarboxylate is bound at residue Y133. FMN is bound at residue T159. An a 2-oxocarboxylate-binding site is contributed by R168. K257 contacts FMN. The active-site Proton acceptor is H281. Residues 312–316 (DGGIR) and 335–336 (GR) each bind FMN.

Belongs to the FMN-dependent alpha-hydroxy acid dehydrogenase family. FMN serves as cofactor.

The catalysed reaction is 3-amino-5-[(4-hydroxyphenyl)methyl]-4,4-dimethyl-2-pyrrolidin-2-one + O2 + H2O = pre-mycofactocin + H2O2 + NH4(+). Its function is as follows. Involved in the biosynthesis of the enzyme cofactor mycofactocin (MFT). Catalyzes the oxidative deamination of AHDP (3-amino-5-[(4-hydroxyphenyl)methyl]-4,4-dimethyl-2-pyrrolidin-2-one), forming an alpha-keto amide moiety on the resulting molecule, which is called pre-mycofactocin (PMFT). This reaction occurs via a 5-[(4-hydroxyphenyl)methyl]-3-imino-4,4-dimethylpyrrolidin-2-one intermediate, which converts to PMFT. The alpha-keto amide moiety is the redox-active center for the redox activity of mycofactocin. Is required for the in vivo ethanol assimilation in M.smegmatis. This chain is Pre-mycofactocin synthase, found in Mycolicibacterium smegmatis (strain ATCC 700084 / mc(2)155) (Mycobacterium smegmatis).